The following is a 504-amino-acid chain: Bifunctional purine biosynthesis protein PurH (504 aa).

The MGS-like domain maps to 1 to 144; the sequence is MRKRALISVY…KSFKNVVVIS (144 aa).

Belongs to the PurH family.

It carries out the reaction (6R)-10-formyltetrahydrofolate + 5-amino-1-(5-phospho-beta-D-ribosyl)imidazole-4-carboxamide = 5-formamido-1-(5-phospho-D-ribosyl)imidazole-4-carboxamide + (6S)-5,6,7,8-tetrahydrofolate. It catalyses the reaction IMP + H2O = 5-formamido-1-(5-phospho-D-ribosyl)imidazole-4-carboxamide. It functions in the pathway purine metabolism; IMP biosynthesis via de novo pathway; 5-formamido-1-(5-phospho-D-ribosyl)imidazole-4-carboxamide from 5-amino-1-(5-phospho-D-ribosyl)imidazole-4-carboxamide (10-formyl THF route): step 1/1. The protein operates within purine metabolism; IMP biosynthesis via de novo pathway; IMP from 5-formamido-1-(5-phospho-D-ribosyl)imidazole-4-carboxamide: step 1/1. The sequence is that of Bifunctional purine biosynthesis protein PurH from Fusobacterium nucleatum subsp. nucleatum (strain ATCC 25586 / DSM 15643 / BCRC 10681 / CIP 101130 / JCM 8532 / KCTC 2640 / LMG 13131 / VPI 4355).